A 340-amino-acid chain; its full sequence is Large ribosomal subunit protein uL29m (340 aa).

Residues 1 to 10 (MIRSLHTSAV) show a composition bias toward polar residues. The interval 1–22 (MIRSLHTSAVRQGRKKWPKPLP) is disordered.

This sequence belongs to the universal ribosomal protein uL29 family. As to quaternary structure, component of the mitochondrial large ribosomal subunit. Mature mitochondrial ribosomes consist of a small (37S) and a large (54S) subunit. The 37S subunit contains at least 33 different proteins and 1 molecule of RNA (15S). The 54S subunit contains at least 45 different proteins and 1 molecule of RNA (21S).

It localises to the mitochondrion. The chain is Large ribosomal subunit protein uL29m (MRPL4) from Yarrowia lipolytica (strain CLIB 122 / E 150) (Yeast).